The chain runs to 354 residues: GTPase Obg (354 aa).

The Obg domain occupies 1-159; that stretch reads MKFVDEVKIH…RDLVLELKLL (159 aa). Positions 160 to 333 constitute an OBG-type G domain; sequence ADVGIVGYPN…LLDAVGRALF (174 aa). GTP-binding positions include 166-173, 191-195, 212-215, 283-286, and 314-316; these read GYPNAGKS, FTTLT, DIPG, TKID, and SAV. Mg(2+)-binding residues include S173 and T193.

The protein belongs to the TRAFAC class OBG-HflX-like GTPase superfamily. OBG GTPase family. In terms of assembly, monomer. The cofactor is Mg(2+).

The protein resides in the cytoplasm. An essential GTPase which binds GTP, GDP and possibly (p)ppGpp with moderate affinity, with high nucleotide exchange rates and a fairly low GTP hydrolysis rate. Plays a role in control of the cell cycle, stress response, ribosome biogenesis and in those bacteria that undergo differentiation, in morphogenesis control. This is GTPase Obg from Anaeromyxobacter dehalogenans (strain 2CP-1 / ATCC BAA-258).